Here is a 365-residue protein sequence, read N- to C-terminus: tRNA(Met) cytidine acetate ligase (365 aa).

ATP contacts are provided by residues 7–20, glycine 96, asparagine 152, and arginine 175; that span reads IAEFNPFHNGHKYL.

It belongs to the TmcAL family.

Its subcellular location is the cytoplasm. The catalysed reaction is cytidine(34) in elongator tRNA(Met) + acetate + ATP = N(4)-acetylcytidine(34) in elongator tRNA(Met) + AMP + diphosphate. Functionally, catalyzes the formation of N(4)-acetylcytidine (ac(4)C) at the wobble position of elongator tRNA(Met), using acetate and ATP as substrates. First activates an acetate ion to form acetyladenylate (Ac-AMP) and then transfers the acetyl group to tRNA to form ac(4)C34. This Streptococcus pneumoniae (strain Hungary19A-6) protein is tRNA(Met) cytidine acetate ligase.